Here is a 317-residue protein sequence, read N- to C-terminus: Universal stress protein MT2052 (317 aa).

Residues Gly-13, 128–134 (GYRGQGA), 142–143 (SV), Gly-175, Asp-208, 277–283 (GSHGRGG), and 291–293 (SVS) each bind ATP.

It belongs to the universal stress protein A family.

This chain is Universal stress protein MT2052, found in Mycobacterium tuberculosis (strain CDC 1551 / Oshkosh).